The chain runs to 155 residues: Endoribonuclease YbeY (155 aa).

The Zn(2+) site is built by histidine 114, histidine 118, and histidine 124.

This sequence belongs to the endoribonuclease YbeY family. Zn(2+) is required as a cofactor.

It is found in the cytoplasm. Its function is as follows. Single strand-specific metallo-endoribonuclease involved in late-stage 70S ribosome quality control and in maturation of the 3' terminus of the 16S rRNA. This is Endoribonuclease YbeY from Erwinia tasmaniensis (strain DSM 17950 / CFBP 7177 / CIP 109463 / NCPPB 4357 / Et1/99).